The chain runs to 106 residues: ATPase inhibitor, mitochondrial (106 aa).

The transit peptide at 1–25 (MAGSALAVRARFGVWGMKVLQTRGF) directs the protein to the mitochondrion. Residues 26 to 52 (VSDSSDSMDTGAGSIREAGGAFGKREK) are N-terminal inhibitory region. The disordered stretch occupies residues 26–58 (VSDSSDSMDTGAGSIREAGGAFGKREKAEEDRY). Serine 39 is subject to Phosphoserine. The segment covering 48–58 (GKREKAEEDRY) has biased composition (basic and acidic residues). The stretch at 60–106 (REKTKEQLAALRKHHEDEIDHHSKEIERLQKQIERHKKKIQQLKNNH) forms a coiled coil. The segment at 74-106 (HEDEIDHHSKEIERLQKQIERHKKKIQQLKNNH) is antiparallel alpha-helical coiled coil region. At lysine 103 the chain carries N6-succinyllysine.

It belongs to the ATPase inhibitor family. In terms of assembly, homodimer; represents the active form and is present at a pH value below 6.5. Homotetramer; represents the inactive form and is present at a pH value above 7.0.

It is found in the mitochondrion. Its function is as follows. Endogenous F(1)F(o)-ATPase inhibitor limiting ATP depletion when the mitochondrial membrane potential falls below a threshold and the F(1)F(o)-ATP synthase starts hydrolyzing ATP to pump protons out of the mitochondrial matrix. Required to avoid the consumption of cellular ATP when the F(1)F(o)-ATP synthase enzyme acts as an ATP hydrolase. Indirectly acts as a regulator of heme synthesis in erythroid tissues: regulates heme synthesis by modulating the mitochondrial pH and redox potential, allowing FECH to efficiently catalyze the incorporation of iron into protoporphyrin IX to produce heme. The protein is ATPase inhibitor, mitochondrial of Mus musculus (Mouse).